A 595-amino-acid chain; its full sequence is MKTILLFALSLLLSLSVSDVCAQERVYDISQFGLKANSKKNASPVVRKAIAKIKAECRDGEKVILRFPAGRYNFHEAGSTVREYYISNHDQDNPKKVGIALEDMKNLTIDGQGSEFVFYGRMIPVSLLRSENCVLKNFSIDFEQPHIAQVQVVENDPEKGITFEPAPWVDYRISKDSVFEGLGEGWVMRYSWGIAFDGKTKHVVYNTSDIGCPTKGAFEVAPRRICSPKWKDARLVPGTVVAMRGWGRPTPGIFMSHDVNTSLLDVKVHYAEGMGLLAQLCEDITLDGFGVCLKGNNDPRYFTTQADATHFSGCKGKIVSKNGLYEGMMDDAINVHGTYLKVIKRVDDHTLIGRYMHDQSWGFEWGRPGDDVQFVRSETMELIGKQNQITAIRPYDKGEIQGAREFSITFKEAIDPAINEKSGFGIENLTWTPEVLFAGNTIRNNRARGTLFSTPKKTVVEDNLFDHTSGTAILLCGDCNGWFETGACRDVTIRRNRFINALTNMFQFTNAVISIYPEIPNLKDQQKYFHGGKDGGIVIEDNEFDTFDAPILYAKSVDGLIFRNNVIKTNTEFKPFHWNKDRFLLERVTNVKISE.

A signal peptide spans 1–22; the sequence is MKTILLFALSLLLSLSVSDVCA. 3 PbH1 repeats span residues 432 to 454, 455 to 477, and 488 to 541; these read TPEV…LFST, PKKT…LLCG, and CRDV…VIED.

Belongs to the glycosyl hydrolase 110 family. B subfamily.

It carries out the reaction Hydrolysis of terminal, non-reducing branched (1-&gt;3)-alpha-D-galactosidic residues, producing free D-galactose.. The enzyme catalyses Hydrolysis of terminal, non-reducing linear (1-&gt;3)-alpha-D-galactosidic residues, producing free D-galactose.. It catalyses the reaction Hydrolysis of terminal, non-reducing alpha-D-galactose residues in alpha-D-galactosides, including galactose oligosaccharides, galactomannans and galactolipids.. Functionally, alpha-galactosidase. Removes both branched alpha-1,3-linked galactose residues of blood group B antigens and linear alpha-1,3-linked galactose structures. This chain is Alpha-1,3-galactosidase B (glaB), found in Bacteroides fragilis (strain YCH46).